The primary structure comprises 235 residues: Ornithine decarboxylase antizyme 3 (235 aa).

Phosphoserine occurs at positions 9 and 12.

This sequence belongs to the ODC antizyme family. In terms of assembly, interacts with ODC1 and thereby sterically blocks ODC homodimerization. Interacts with AZIN2; this interaction disrupts the interaction between the antizyme and ODC1. Interacts with GGN. As to expression, testis specific.

The protein resides in the nucleus. The protein localises to the cytoplasm. Its function is as follows. Ornithine decarboxylase (ODC) antizyme protein that negatively regulates ODC activity and intracellular polyamine biosynthesis and uptake in response to increased intracellular polyamine levels. Binds to ODC monomers, inhibiting the assembly of the functional ODC homodimers. Does not target the ODC monomers for degradation, which allows a protein synthesis-independent restoration of ODC activity. Stabilizes AZIN2 by interfering with its ubiquitination. Involved in the translocation of AZNI2 from ER-Golgi intermediate compartment (ERGIC) to the cytosol. Probably plays a key role in spermatogenesis by regulating the intracellular concentration of polyamines in haploid germ cells. The polypeptide is Ornithine decarboxylase antizyme 3 (OAZ3) (Homo sapiens (Human)).